Reading from the N-terminus, the 892-residue chain is Leucine--tRNA ligase (892 aa).

The 'HIGH' region motif lies at 42–52 (PYPSGKLHMGH). Residues 640 to 644 (TMSKS) carry the 'KMSKS' region motif. ATP is bound at residue Lys-643.

Belongs to the class-I aminoacyl-tRNA synthetase family.

It localises to the cytoplasm. The catalysed reaction is tRNA(Leu) + L-leucine + ATP = L-leucyl-tRNA(Leu) + AMP + diphosphate. This Albidiferax ferrireducens (strain ATCC BAA-621 / DSM 15236 / T118) (Rhodoferax ferrireducens) protein is Leucine--tRNA ligase.